The following is a 37-amino-acid chain: Cytochrome b6-f complex subunit 5 (37 aa).

The chain crosses the membrane as a helical span at residues 5 to 25 (LLFGIVLGLIPITLAGLFVTA).

Belongs to the PetG family. As to quaternary structure, the 4 large subunits of the cytochrome b6-f complex are cytochrome b6, subunit IV (17 kDa polypeptide, PetD), cytochrome f and the Rieske protein, while the 4 small subunits are PetG, PetL, PetM and PetN. The complex functions as a dimer.

Its subcellular location is the plastid. It localises to the chloroplast thylakoid membrane. Its function is as follows. Component of the cytochrome b6-f complex, which mediates electron transfer between photosystem II (PSII) and photosystem I (PSI), cyclic electron flow around PSI, and state transitions. PetG is required for either the stability or assembly of the cytochrome b6-f complex. In Lemna minor (Common duckweed), this protein is Cytochrome b6-f complex subunit 5.